The chain runs to 344 residues: Sorting nexin-16 (344 aa).

The segment covering 1–10 (MATPYVPVPM) has biased composition (pro residues). 2 disordered regions span residues 1–49 (MATP…DSSV) and 83–105 (SIEY…NWED). A compositionally biased stretch (polar residues) spans 14 to 26 (NSASSFTNNRNQR). Over residues 27 to 40 (SSSFGSVSTSSNSS) the composition is skewed to low complexity. The span at 88–105 (ARPRDTEEQHPDALNWED) shows a compositional bias: basic and acidic residues. Residues 105 to 218 (DRPSTPTILG…EFLCLDDPPG (114 aa)) form the PX domain. The a 1,2-diacyl-sn-glycero-3-phospho-(1D-myo-inositol-3-phosphate) site is built by R144, T146, and R184. S222 carries the post-translational modification Phosphoserine. A coiled-coil region spans residues 223-278 (LEESRAFCETLEETNYHLQRELLEKQKEVESLKKLLGEKQLHIDALETRIRTLSLE).

The protein belongs to the sorting nexin family. In terms of assembly, homooligomer. Interacts with EGFR.

It is found in the early endosome membrane. The protein localises to the late endosome membrane. It localises to the cytoplasm. Its subcellular location is the lysosome. May be involved in several stages of intracellular trafficking. Plays a role in protein transport from early to late endosomes. Plays a role in protein transport to the lysosome. Promotes degradation of EGFR after EGF signaling. This Rattus norvegicus (Rat) protein is Sorting nexin-16 (Snx16).